The chain runs to 214 residues: Redox-sensing transcriptional repressor Rex (214 aa).

A DNA-binding region (H-T-H motif) is located at residues 17–56; sequence LYYRIFKRFHADQVEKASSKQIADAMGIDSATVRRDFSYF. 91–96 contributes to the NAD(+) binding site; that stretch reads GCGNIG.

This sequence belongs to the transcriptional regulatory Rex family. As to quaternary structure, homodimer.

Its subcellular location is the cytoplasm. Modulates transcription in response to changes in cellular NADH/NAD(+) redox state. This is Redox-sensing transcriptional repressor Rex from Streptococcus pyogenes serotype M4 (strain MGAS10750).